We begin with the raw amino-acid sequence, 487 residues long: DNA ligase (487 aa).

Lys-159 acts as the N6-AMP-lysine intermediate in catalysis. ATP is bound by residues Arg-164, Arg-182, and Glu-217. Glu-217 serves as a coordination point for a divalent metal cation. Positions 229–237 (EGLDFLFDA) are interaction with the sliding clamp. Residue Glu-344 participates in a divalent metal cation binding. Arg-359 and Lys-365 together coordinate ATP.

The protein belongs to the ATP-dependent DNA ligase family. In terms of assembly, interacts with the sliding clamp. The cofactor is a divalent metal cation.

The enzyme catalyses ATP + (deoxyribonucleotide)n-3'-hydroxyl + 5'-phospho-(deoxyribonucleotide)m = (deoxyribonucleotide)n+m + AMP + diphosphate.. Its function is as follows. DNA ligase, which is expressed in the early stage of lytic development, has been implicated in T4 DNA synthesis and genetic recombination. It may also play a role in T4 DNA repair. The chain is DNA ligase (30) from Escherichia coli (Bacteriophage T6).